Reading from the N-terminus, the 265-residue chain is Acyl-[acyl-carrier-protein]--UDP-N-acetylglucosamine O-acyltransferase (265 aa).

Belongs to the transferase hexapeptide repeat family. LpxA subfamily. Homotrimer.

The protein resides in the cytoplasm. It carries out the reaction a (3R)-hydroxyacyl-[ACP] + UDP-N-acetyl-alpha-D-glucosamine = a UDP-3-O-[(3R)-3-hydroxyacyl]-N-acetyl-alpha-D-glucosamine + holo-[ACP]. Its pathway is glycolipid biosynthesis; lipid IV(A) biosynthesis; lipid IV(A) from (3R)-3-hydroxytetradecanoyl-[acyl-carrier-protein] and UDP-N-acetyl-alpha-D-glucosamine: step 1/6. Involved in the biosynthesis of lipid A, a phosphorylated glycolipid that anchors the lipopolysaccharide to the outer membrane of the cell. The sequence is that of Acyl-[acyl-carrier-protein]--UDP-N-acetylglucosamine O-acyltransferase from Polynucleobacter asymbioticus (strain DSM 18221 / CIP 109841 / QLW-P1DMWA-1) (Polynucleobacter necessarius subsp. asymbioticus).